Consider the following 397-residue polypeptide: Putative odorant receptor 83c (397 aa).

The Cytoplasmic portion of the chain corresponds to 1–39 (MSTSESPSSRFRELSKYINSLTNLLGVDFLSPKLKFNYR). Residues 40–60 (TWTTIFAIANYTGFTVFTILN) traverse the membrane as a helical segment. Topologically, residues 61-70 (NGGDWRVGLK) are extracellular. A helical membrane pass occupies residues 71-90 (ASLMTGGLFHGLGKFLTCLL). Residues 91 to 136 (KHQDMRRLVLYSQSIYDEYETRGDSYHRTLNSNIDRLLGIMKIIRN) are Cytoplasmic-facing. Residues 137 to 157 (GYVFAFCLMELLPLAMLMYDG) form a helical membrane-spanning segment. Residues 158-186 (TRVTAMQYLIPGLPLENNYCYVVTYMIQT) are Extracellular-facing. The chain crosses the membrane as a helical span at residues 187-207 (VTMLVQGVGFYSGDLFVFLGL). Over 208–282 (TQILTFADML…ALYYELIATQ (75 aa)) the chain is Cytoplasmic. Residues 283–299 (VLSMALAMMLSFCINLS) form a helical membrane-spanning segment. At 300–305 (SFHMPS) the chain is on the extracellular side. Residues 306 to 326 (AIFFVVSAYSMSIYCILGTIL) traverse the membrane as a helical segment. Residues 327–365 (EFAYDQVYESICNVTWYELSGEQRKLFGFLLRESQYPHN) lie on the Cytoplasmic side of the membrane. Residues 366–386 (IQILGVMSLSVRTALQIVKLI) form a helical membrane-spanning segment. At 387-397 (YSVSMMMMNRA) the chain is on the extracellular side.

It belongs to the insect chemoreceptor superfamily. Heteromeric odorant receptor channel (TC 1.A.69) family. Or67d subfamily. Interacts with Orco. Complexes exist early in the endomembrane system in olfactory sensory neurons (OSNs), coupling these complexes to the conserved ciliary trafficking pathway. In terms of tissue distribution, expressed in olfactory sensory neurons in the antenna.

It localises to the cell membrane. Its function is as follows. Odorant receptor which mediates acceptance or avoidance behavior, depending on its substrates. The odorant receptor repertoire encodes a large collection of odor stimuli that vary widely in identity, intensity, and duration. May form a complex with Orco to form odorant-sensing units, providing sensitive and prolonged odorant signaling and calcium permeability. In Drosophila melanogaster (Fruit fly), this protein is Putative odorant receptor 83c (Or83c).